The primary structure comprises 920 residues: GTPase activating protein homolog 1 (920 aa).

The span at 65-87 (NLGGLSNDSTNNNSNSNNTIDSS) shows a compositional bias: low complexity. Residues 65-91 (NLGGLSNDSTNNNSNSNNTIDSSKPLS) form a disordered region. Positions 90-344 (LSFENDMSDG…FVDIIDPEVD (255 aa)) constitute an F-BAR domain. Residues 184 to 276 (LNEAIKDMEK…EDEYKEQINE (93 aa)) adopt a coiled-coil conformation. Positions 403 to 449 (TNTITSQSGSTIISNGASQPIEIPSPQPISEQQQIPPQQQQQQQQAQ) are enriched in low complexity. 2 disordered regions span residues 403–468 (TNTI…PMGR) and 490–518 (STSS…LSKS). Residues 450–468 (VPPTSINQSSSPPVNPMGR) are compositionally biased toward polar residues. A compositionally biased stretch (low complexity) spans 490–513 (STSSLLTKDGNSTTSSNTSTSNSN). The Rho-GAP domain maps to 533–716 (VELEVLIEND…NMIIDSLETK (184 aa)). The segment at 727–836 (PIIPDDENSD…VSSNGNNINS (110 aa)) is disordered. Residues 730 to 741 (PDDENSDDDDDD) show a composition bias toward acidic residues. A compositionally biased stretch (low complexity) spans 757–836 (NDINTTNINN…VSSNGNNINS (80 aa)).

The protein resides in the cytoplasm. Its subcellular location is the contractile vacuole. Its function is as follows. Rho GTPase-activating protein involved in the signal transduction pathway. Regulator of the contractile vacuole network as well as involved in driving vacuole emptying. The polypeptide is GTPase activating protein homolog 1 (mgp1) (Dictyostelium discoideum (Social amoeba)).